Reading from the N-terminus, the 892-residue chain is Translation initiation factor IF-2 (892 aa).

Disordered regions lie at residues 32–102 (LAQA…PGDA) and 114–300 (KAPE…KQAE). A compositionally biased stretch (polar residues) spans 35–48 (AGSSDTKNSPASKA). Over residues 139–166 (QEEKKESSEETSPERVEETLIIRTRTEP) the composition is skewed to basic and acidic residues. A compositionally biased stretch (low complexity) spans 200 to 211 (AASTEETTQQQP). The span at 212–224 (RQNDAASYNNKQQ) shows a compositional bias: polar residues. The segment covering 225–238 (PSGTSSRPASSAPS) has biased composition (low complexity). Basic and acidic residues predominate over residues 252-276 (RGSERDRSKRSDESVKAFTGRDRYG). Positions 397–566 (IRSPIVAFMG…ALQAEVLELK (170 aa)) constitute a tr-type G domain. The G1 stretch occupies residues 406-413 (GHVDHGKT). 406–413 (GHVDHGKT) provides a ligand contact to GTP. The segment at 431-435 (AITQH) is G2. The G3 stretch occupies residues 452–455 (DTPG). GTP-binding positions include 452-456 (DTPGH) and 506-509 (NKCD). The interval 506-509 (NKCD) is G4. The interval 542–544 (SAK) is G5.

Belongs to the TRAFAC class translation factor GTPase superfamily. Classic translation factor GTPase family. IF-2 subfamily.

The protein resides in the cytoplasm. One of the essential components for the initiation of protein synthesis. Protects formylmethionyl-tRNA from spontaneous hydrolysis and promotes its binding to the 30S ribosomal subunits. Also involved in the hydrolysis of GTP during the formation of the 70S ribosomal complex. The sequence is that of Translation initiation factor IF-2 from Chlamydia trachomatis serovar A (strain ATCC VR-571B / DSM 19440 / HAR-13).